The chain runs to 293 residues: MALLTAQGVKKVFQFQKPEGREHLRRLLNWEEFDELRDSRRSILLDTLYESIIFAVGKGFPWREVAQVVKFTEELLKETKGCSITEAVTILGNKLRDYQGQFNTTHLLALCDYFHNTFIRHYKLYQYVLGQDQDVNLTVTNLEVCTPPQPLPLAEGKDREVWKHEQQLEELSTAEVQKRTNMLLLKGALRLEQQHLLQETFSQLPGRRHQTLNREELEKLITEAIHIQIECLKELLQYEIQITFDILDLKLQKKTLNLNAPIPPLVPIAGQPGQDEALKLSKTHKGKKAKAKK.

This is an uncharacterized protein from Bos taurus (Bovine).